Reading from the N-terminus, the 269-residue chain is MKKIYVLSDSTGETAERVVRAALSQFGGSDVRIVRLAKVCNQQEVQQAVATVTADEGLLVYTLVDSSLAVAVHTIAEEHGLMAFDLLSPLLHSLSVFLGTVAQSTPGLLHQIDTDYFRRMEAVNFTVKHDDGQENRGLVKADLVLVGVSRSSKTPLSMYLANKGYKVANVPLVKGIDPPEELEAIDPSKVVGLLISPKRLVEIRTSRLVNMGQSMKNSYADYEKVEDEIAFCRQYYRRHPGWLIIDVTCKSVEESASEILRRLVGQFAE.

An ADP-binding site is contributed by 147–154 (GVSRSSKT).

This sequence belongs to the pyruvate, phosphate/water dikinase regulatory protein family. PDRP subfamily.

It carries out the reaction N(tele)-phospho-L-histidyl/L-threonyl-[pyruvate, phosphate dikinase] + ADP = N(tele)-phospho-L-histidyl/O-phospho-L-threonyl-[pyruvate, phosphate dikinase] + AMP + H(+). The catalysed reaction is N(tele)-phospho-L-histidyl/O-phospho-L-threonyl-[pyruvate, phosphate dikinase] + phosphate + H(+) = N(tele)-phospho-L-histidyl/L-threonyl-[pyruvate, phosphate dikinase] + diphosphate. Bifunctional serine/threonine kinase and phosphorylase involved in the regulation of the pyruvate, phosphate dikinase (PPDK) by catalyzing its phosphorylation/dephosphorylation. In Trichlorobacter lovleyi (strain ATCC BAA-1151 / DSM 17278 / SZ) (Geobacter lovleyi), this protein is Putative pyruvate, phosphate dikinase regulatory protein.